The sequence spans 151 residues: MPAPAEVQAATLEKFIQGWAGWTPDGFLANWSEDCTQKTLPFSSGVPLRTRADTEKLFPVLMSLMSNFTLDIHNVVHDAPQGKAVIYALTKADTPFGPYRNEHAIFLWFNEIGDRVQKIEEMFDAVVMQEFLPKLDKYVADNKMQLGAKFS.

The protein belongs to the avfA family.

It participates in secondary metabolite biosynthesis. Its function is as follows. Monooxygenase; part of the gene cluster that mediates the biosynthesis of the tetrahydroxanthone dimer neosartorin, which exhibits antibacterial activity. The two different monomeric units appear to be synthesized by the same set of enzymes, among which the Baeyer-Villiger monooxygenase nsrF is the key enzyme for the divergence of the biosynthetic routes. The pathway begins with the synthesis of atrochrysone thioester by the polyketide synthase nsrB. The atrochrysone carboxyl ACP thioesterase nsrC then breaks the thioester bond and releases the atrochrysone carboxylic acid from AacuL. Atrochrysone carboxylic acid is decarboxylated by the decarboxylase nsrE, and oxidized by the anthrone oxygenase nsrD to yield emodin. Emodin is then reduced to emodin hydroquinone by the oxidoreductase nsrR. A-ring reduction by the short chain dehydrogenase nsrJ, dehydration by the scytalone dehydratase-like protein nsrI and probable spontaneous re-oxidation, results in overall deoxygenation to chrysophanol. The Baeyer-Villiger monooxygenase nsrF accepts chrysophanol as a substrate to insert one oxygen atom at two different positions to yield the precursors of both monomric units. NsrF is promiscuous/flexible in interacting with the 2 (non methylated and methylated) aromatic rings of chrysophanol, thus diverging the biosynthetic pathway at this point. After the hydrolysis of the lactones, methylesterification by the methyltransferase nsrG yields respectively moniliphenone and 2,2',6'-trihydroxy-4-methyl-6-methoxya-cyldiphenylmethanone. The next steps are the hydroxylation by the FAD-dependent monooxygenase nsrK, followed by isomerization by the monooxygenase nsrQ. The short chain dehydrogenase/reductase nsrO then catalyzes the C-5 ketoreduction to give the xanthone skeleton of blennolide C and 5-acetylblennolide A. The acetyltransferase nsrL has a strict substrate specificity and uses only blennolide A but not blennolide C to yield 5-acetylblennolide A as the single-acetylated product. In the final step of the biosynthesis, the heterodimerization of the 2 xanthones, blennolide C and 5-acetylblennolide A, is catalyzed by the cytochrome P450 monooxygenase nsrP. NsrP can utilize at least three different xanthones as its substrates to perform the dimerization reaction. This chain is Monooxygenase nsrQ, found in Aspergillus novofumigatus (strain IBT 16806).